A 90-amino-acid polypeptide reads, in one-letter code: Small ribosomal subunit protein bS20 (90 aa).

Positions 1 to 25 (MANSAQARKRARQAAKANSHNSALR) are disordered.

The protein belongs to the bacterial ribosomal protein bS20 family.

In terms of biological role, binds directly to 16S ribosomal RNA. This is Small ribosomal subunit protein bS20 from Burkholderia multivorans (strain ATCC 17616 / 249).